The sequence spans 236 residues: Endonuclease V (236 aa).

The Mg(2+) site is built by D47 and D115.

It belongs to the endonuclease V family. Mg(2+) serves as cofactor.

It is found in the cytoplasm. It carries out the reaction Endonucleolytic cleavage at apurinic or apyrimidinic sites to products with a 5'-phosphate.. Functionally, DNA repair enzyme involved in the repair of deaminated bases. Selectively cleaves double-stranded DNA at the second phosphodiester bond 3' to a deoxyinosine leaving behind the intact lesion on the nicked DNA. This Xanthomonas campestris pv. campestris (strain B100) protein is Endonuclease V.